The following is a 122-amino-acid chain: Large ribosomal subunit protein uL14 (122 aa).

This sequence belongs to the universal ribosomal protein uL14 family. As to quaternary structure, part of the 50S ribosomal subunit. Forms a cluster with proteins L3 and L19. In the 70S ribosome, L14 and L19 interact and together make contacts with the 16S rRNA in bridges B5 and B8.

Functionally, binds to 23S rRNA. Forms part of two intersubunit bridges in the 70S ribosome. The polypeptide is Large ribosomal subunit protein uL14 (Exiguobacterium sp. (strain ATCC BAA-1283 / AT1b)).